Consider the following 294-residue polypeptide: Flavin-dependent thymidylate synthase (294 aa).

One can recognise a ThyX domain in the interval 27-250; it reads GFIRVIDYMG…PFTYEAFEEY (224 aa). Residues Thr73, 96–98, and Glu104 contribute to the FAD site; that span reads RHR. Residues 93–96, 104–108, and Arg189 each bind dUMP; these read QWIR and EYSAR. A ThyX motif motif is present at residues 96–106; the sequence is RHRTASVNEYS. FAD contacts are provided by residues 205-207 and His211; that span reads NLH. Residue Arg216 participates in dUMP binding. Arg216 acts as the Involved in ionization of N3 of dUMP, leading to its activation in catalysis.

Belongs to the thymidylate synthase ThyX family. As to quaternary structure, homotetramer. FAD is required as a cofactor.

It catalyses the reaction dUMP + (6R)-5,10-methylene-5,6,7,8-tetrahydrofolate + NADPH + H(+) = dTMP + (6S)-5,6,7,8-tetrahydrofolate + NADP(+). The protein operates within pyrimidine metabolism; dTTP biosynthesis. Its function is as follows. Catalyzes the reductive methylation of 2'-deoxyuridine-5'-monophosphate (dUMP) to 2'-deoxythymidine-5'-monophosphate (dTMP) while utilizing 5,10-methylenetetrahydrofolate (mTHF) as the methyl donor, and NADPH and FADH(2) as the reductant. The sequence is that of Flavin-dependent thymidylate synthase from Rickettsia bellii (strain RML369-C).